Reading from the N-terminus, the 101-residue chain is Small ribosomal subunit protein uS14 (101 aa).

The tract at residues 1–21 (MAKVSLIKKNESRKKKSQSLH) is disordered. Residues 11–21 (ESRKKKSQSLH) are compositionally biased toward basic residues.

The protein belongs to the universal ribosomal protein uS14 family. As to quaternary structure, part of the 30S ribosomal subunit. Contacts proteins S3 and S10.

In terms of biological role, binds 16S rRNA, required for the assembly of 30S particles and may also be responsible for determining the conformation of the 16S rRNA at the A site. In Rickettsia canadensis (strain McKiel), this protein is Small ribosomal subunit protein uS14.